Here is a 65-residue protein sequence, read N- to C-terminus: Large ribosomal subunit protein bL35 (65 aa).

Belongs to the bacterial ribosomal protein bL35 family.

The protein is Large ribosomal subunit protein bL35 of Neisseria meningitidis serogroup A / serotype 4A (strain DSM 15465 / Z2491).